A 489-amino-acid polypeptide reads, in one-letter code: Ulvan Lyase-PL25 (489 aa).

The signal sequence occupies residues methionine 1 to glycine 31. A lipid anchor (N-palmitoyl cysteine) is attached at cysteine 32. Cysteine 32 is lipidated: S-diacylglycerol cysteine. Residues asparagine 60 and asparagine 122 each contribute to the substrate site. Histidine 123 serves as the catalytic Proton donor. Substrate-binding residues include lysine 125 and histidine 143. The active-site Proton acceptor is the tyrosine 188. Positions 204, 208, and 246 each coordinate substrate. Zn(2+) is bound at residue histidine 208. 3 residues coordinate Zn(2+): histidine 264, cysteine 266, and histidine 278. Position 278 (histidine 278) interacts with substrate.

The protein belongs to the polysaccharide lyase 25 family.

The protein resides in the cell membrane. Its function is as follows. Ulvan lyase involved in ulvan degradation. Ulvan is the main polysaccharide component of the Ulvales (green seaweed) cell wall. It is composed of disaccharide building blocks comprising 3-sulfated rhamnose (Rha3S) linked to D-glucuronic acid (GlcA), L-iduronic acid (IduA), or D-xylose (Xyl). Ulvan lyase catalyzes the endolytic cleavage of the glycosidic bond between Rha3S and the uronic acids GlcA or IduA, producing oligosaccharides that have unsaturated 4-deoxy-L-threo-hex-4-enopyranosiduronic acid (deltaUA) at the non-reducing end. This results eventually in the degradation of the ulvan polysaccharide into deltaUA-Rha3S disaccharides and deltaUA-Rha3S-Xyl-Rha3S tetrasaccharides. This is Ulvan Lyase-PL25 from Pseudoalteromonas sp. (strain PLSV).